Reading from the N-terminus, the 461-residue chain is RCC1-like G exchanging factor-like protein (461 aa).

Low complexity predominate over residues 1 to 10 (MLAAARALRG). The N-terminal 34 residues, 1-34 (MLAAARALRGPRPRWPTPAREHWTPAGRSRSRRE), are a transit peptide targeting the mitochondrion. Residues 1-35 (MLAAARALRGPRPRWPTPAREHWTPAGRSRSRREA) form a disordered region. 7 RCC1 repeats span residues 55–121 (ADRV…LSSK), 125–188 (VTKV…VLTD), 190–244 (EGVF…FLTD), 245–297 (KGEV…ALSA), 298–350 (DGGV…VLNA), 352–408 (GHVF…ALTN), and 409–458 (KGEL…TLAK).

Forms a regulatory protein-RNA complex, consisting of RCC1L, NGRN, RPUSD3, RPUSD4, TRUB2, FASTKD2 and 16S mt-rRNA. Interacts with 16S mt-rRNA; this interaction is direct. Interacts with OPA1; this interaction is direct. As to expression, at E8.5, broadly expressed in yolk sac placenta, decidua, and embryo, with highest levels found in the trophoblast giant cells (TGCs) and ectoplacental cone (at protein level).

It is found in the mitochondrion inner membrane. Functionally, guanine nucleotide exchange factor (GEF) for mitochondrial dynamin-related GTPase OPA1. Activates OPA1, by exchanging bound GDP for free GTP, and drives OPA1 and MFN1-dependent mitochondrial fusion. Plays an essential role in mitochondrial ribosome biogenesis. As a component of a functional protein-RNA module, consisting of RCC1L, NGRN, RPUSD3, RPUSD4, TRUB2, FASTKD2 and 16S mitochondrial ribosomal RNA (16S mt-rRNA), controls 16S mt-rRNA abundance and is required for intra-mitochondrial translation of core subunits of the oxidative phosphorylation system. The polypeptide is RCC1-like G exchanging factor-like protein (Mus musculus (Mouse)).